A 314-amino-acid chain; its full sequence is Porphobilinogen deaminase (314 aa).

C234 is subject to S-(dipyrrolylmethanemethyl)cysteine.

The protein belongs to the HMBS family. As to quaternary structure, monomer. Dipyrromethane is required as a cofactor.

The enzyme catalyses 4 porphobilinogen + H2O = hydroxymethylbilane + 4 NH4(+). Its pathway is porphyrin-containing compound metabolism; protoporphyrin-IX biosynthesis; coproporphyrinogen-III from 5-aminolevulinate: step 2/4. In terms of biological role, tetrapolymerization of the monopyrrole PBG into the hydroxymethylbilane pre-uroporphyrinogen in several discrete steps. The protein is Porphobilinogen deaminase of Mycobacterium marinum (strain ATCC BAA-535 / M).